The chain runs to 344 residues: Protein pelota homolog (344 aa).

It belongs to the eukaryotic release factor 1 family. Pelota subfamily. As to quaternary structure, monomer. A divalent metal cation is required as a cofactor.

The protein localises to the cytoplasm. May function in recognizing stalled ribosomes, interact with stem-loop structures in stalled mRNA molecules, and effect endonucleolytic cleavage of the mRNA. May play a role in the release non-functional ribosomes and degradation of damaged mRNAs. Has endoribonuclease activity. This chain is Protein pelota homolog, found in Saccharolobus islandicus (strain M.14.25 / Kamchatka #1) (Sulfolobus islandicus).